We begin with the raw amino-acid sequence, 164 residues long: Dehydrin Rab16B (164 aa).

The interval M1–H164 is disordered. Over residues G25–G53 the composition is skewed to gly residues. Positions G107–G117 are enriched in low complexity. The segment covering G147–H164 has biased composition (basic and acidic residues).

The protein belongs to the plant dehydrin family.

The sequence is that of Dehydrin Rab16B (RAB16B) from Oryza sativa subsp. indica (Rice).